Consider the following 211-residue polypeptide: N-(5'-phosphoribosyl)anthranilate isomerase (211 aa).

It belongs to the TrpF family.

It catalyses the reaction N-(5-phospho-beta-D-ribosyl)anthranilate = 1-(2-carboxyphenylamino)-1-deoxy-D-ribulose 5-phosphate. Its pathway is amino-acid biosynthesis; L-tryptophan biosynthesis; L-tryptophan from chorismate: step 3/5. The polypeptide is N-(5'-phosphoribosyl)anthranilate isomerase (Desulfovibrio desulfuricans (strain ATCC 27774 / DSM 6949 / MB)).